A 351-amino-acid polypeptide reads, in one-letter code: 3-hydroxy-4-methyl-anthranilyl-[aryl-carrier protein] 5-monooxygenase (351 aa).

It belongs to the aromatic-ring hydroxylase family. Requires FAD as cofactor.

It catalyses the reaction 3-hydroxy-4-methylanthranilyl-[aryl-carrier protein] + NADH + O2 + H(+) = 3,5-dihydroxy-4-methylanthranilyl-[aryl-carrier protein] + NAD(+) + H2O. It functions in the pathway antibiotic biosynthesis. In terms of biological role, involved in the biosynthesis of the antitumor antibiotic sibiromycin. Hydroxylates the C5 position of the peptidyl carrier protein (PCP)-bound 4-methyl-3-hydroxyanthranilic acid (4-MHA or 3H4MAA), leading to the formation of the fully substituted anthranilate moiety found in sibiromycin. The protein is 3-hydroxy-4-methyl-anthranilyl-[aryl-carrier protein] 5-monooxygenase of Streptosporangium sibiricum.